We begin with the raw amino-acid sequence, 450 residues long: Bifunctional protein GlmU (450 aa).

The interval 1–229 is pyrophosphorylase; it reads MRRHAIILAA…VEEIMGVNDR (229 aa). UDP-N-acetyl-alpha-D-glucosamine contacts are provided by residues 8–11, K22, Q72, and 77–78; these read LAAG and GT. Residue D102 participates in Mg(2+) binding. UDP-N-acetyl-alpha-D-glucosamine-binding residues include G139, E154, and N227. N227 provides a ligand contact to Mg(2+). A linker region spans residues 230-250; it reads VMLSQAEKAMQRRTNHYHMLN. The tract at residues 251–450 is N-acetyltransferase; it reads GVTIIDPDST…RQTTKEGYRK (200 aa). Residues R332 and K350 each contribute to the UDP-N-acetyl-alpha-D-glucosamine site. The active-site Proton acceptor is the H362. UDP-N-acetyl-alpha-D-glucosamine is bound by residues Y365 and N376. Residues 385-386, A422, and R439 contribute to the acetyl-CoA site; that span reads NY.

This sequence in the N-terminal section; belongs to the N-acetylglucosamine-1-phosphate uridyltransferase family. It in the C-terminal section; belongs to the transferase hexapeptide repeat family. In terms of assembly, homotrimer. Requires Mg(2+) as cofactor.

It localises to the cytoplasm. It carries out the reaction alpha-D-glucosamine 1-phosphate + acetyl-CoA = N-acetyl-alpha-D-glucosamine 1-phosphate + CoA + H(+). The enzyme catalyses N-acetyl-alpha-D-glucosamine 1-phosphate + UTP + H(+) = UDP-N-acetyl-alpha-D-glucosamine + diphosphate. It functions in the pathway nucleotide-sugar biosynthesis; UDP-N-acetyl-alpha-D-glucosamine biosynthesis; N-acetyl-alpha-D-glucosamine 1-phosphate from alpha-D-glucosamine 6-phosphate (route II): step 2/2. The protein operates within nucleotide-sugar biosynthesis; UDP-N-acetyl-alpha-D-glucosamine biosynthesis; UDP-N-acetyl-alpha-D-glucosamine from N-acetyl-alpha-D-glucosamine 1-phosphate: step 1/1. Its pathway is bacterial outer membrane biogenesis; LPS lipid A biosynthesis. Its function is as follows. Catalyzes the last two sequential reactions in the de novo biosynthetic pathway for UDP-N-acetylglucosamine (UDP-GlcNAc). The C-terminal domain catalyzes the transfer of acetyl group from acetyl coenzyme A to glucosamine-1-phosphate (GlcN-1-P) to produce N-acetylglucosamine-1-phosphate (GlcNAc-1-P), which is converted into UDP-GlcNAc by the transfer of uridine 5-monophosphate (from uridine 5-triphosphate), a reaction catalyzed by the N-terminal domain. The protein is Bifunctional protein GlmU of Staphylococcus aureus (strain Mu50 / ATCC 700699).